A 506-amino-acid chain; its full sequence is Sodium-coupled neutral amino acid symporter 2 (506 aa).

The tract at residues Met1–Asn23 is disordered. The Cytoplasmic segment spans residues Met1–Ser76. The interval Met1–Met96 is regulates protein turnover upon amino acid deprivation. Residues Ser12, Ser21, Ser22, and Ser55 each carry the phosphoserine modification. A helical membrane pass occupies residues Val77–Met96. Asn82 serves as a coordination point for Na(+). At Ala97–Ala102 the chain is on the extracellular side. Residues Leu103–Leu123 form a helical membrane-spanning segment. The Cytoplasmic portion of the chain corresponds to Lys124–Asn158. The chain crosses the membrane as a helical span at residues Ile159–Ile177. Over Gln178–Gly188 the chain is Extracellular. Residues Leu189–Leu209 form a helical membrane-spanning segment. Residues Ser210 to Tyr217 lie on the Cytoplasmic side of the membrane. The chain crosses the membrane as a helical span at residues Leu218 to Cys238. Residues Lys239–Thr292 are Extracellular-facing. A disulfide bridge links Cys245 with Cys281. N-linked (GlcNAc...) asparagine glycosylation is found at Asn258 and Asn274. The helical transmembrane segment at Val293 to Tyr313 threads the bilayer. Residues Glu314 to Lys329 are Cytoplasmic-facing. Residues Ile330–Phe350 form a helical membrane-spanning segment. Residues Tyr351–Leu371 are Extracellular-facing. A helical membrane pass occupies residues Leu372–Phe392. Thr386 contributes to the Na(+) binding site. The Cytoplasmic portion of the chain corresponds to Pro393–His413. A helical membrane pass occupies residues Ser414–Ile434. Residues Arg435–Asp436 lie on the Extracellular side of the membrane. A helical transmembrane segment spans residues Ile437–Phe457. At Tyr458–Lys472 the chain is on the cytoplasmic side. The helical transmembrane segment at Ile473–Leu495 threads the bilayer. The Extracellular segment spans residues Asp496 to His506.

This sequence belongs to the amino acid/polyamine transporter 2 family. In terms of processing, polyubiquitination by NEDD4L regulates the degradation and the activity of SLC38A2.

It localises to the cell membrane. The catalysed reaction is L-alanine(in) + Na(+)(in) = L-alanine(out) + Na(+)(out). The enzyme catalyses glycine(in) + Na(+)(in) = glycine(out) + Na(+)(out). It catalyses the reaction L-serine(in) + Na(+)(in) = L-serine(out) + Na(+)(out). It carries out the reaction L-proline(in) + Na(+)(in) = L-proline(out) + Na(+)(out). The catalysed reaction is L-methionine(in) + Na(+)(in) = L-methionine(out) + Na(+)(out). The enzyme catalyses L-histidine(in) + Na(+)(in) = L-histidine(out) + Na(+)(out). It catalyses the reaction L-asparagine(in) + Na(+)(in) = L-asparagine(out) + Na(+)(out). It carries out the reaction L-glutamine(in) + Na(+)(in) = L-glutamine(out) + Na(+)(out). The catalysed reaction is L-threonine(in) + Na(+)(in) = L-threonine(out) + Na(+)(out). The enzyme catalyses L-leucine(in) + Na(+)(in) = L-leucine(out) + Na(+)(out). It catalyses the reaction L-phenylalanine(in) + Na(+)(in) = L-phenylalanine(out) + Na(+)(out). With respect to regulation, inhibited by N-methyl-D-glucamine. Inhibited by choline. Allosteric regulation of sodium ions binding by pH. Its function is as follows. Symporter that cotransports neutral amino acids and sodium ions from the extracellular to the intracellular side of the cell membrane. The transport is pH-sensitive, Li(+)-intolerant, electrogenic, driven by the Na(+) electrochemical gradient and cotransports of neutral amino acids and sodium ions with a stoichiometry of 1:1. May function in the transport of amino acids at the blood-brain barrier. May function in the transport of amino acids in the supply of maternal nutrients to the fetus through the placenta. Maintains a key metabolic glutamine/glutamate balance underpinning retrograde signaling by dendritic release of the neurotransmitter glutamate. Transports L-proline in differentiating osteoblasts for the efficient synthesis of proline-enriched proteins and provides proline essential for osteoblast differentiation and bone formation during bone development. The polypeptide is Sodium-coupled neutral amino acid symporter 2 (Pan paniscus (Pygmy chimpanzee)).